We begin with the raw amino-acid sequence, 801 residues long: Lon protease 2 (801 aa).

One can recognise a Lon N-terminal domain in the interval 14–209; it reads LPMLPVRDIV…LVNEILAAEL (196 aa). 361–368 provides a ligand contact to ATP; the sequence is GPPGVGKT. In terms of domain architecture, Lon proteolytic spans 597–778; the sequence is DSQVGVVQGL…DEVFAVAFDK (182 aa). Catalysis depends on residues Ser-684 and Lys-727. The span at 780–791 shows a compositional bias: basic and acidic residues; sequence AKGQEKKPAAKK. Residues 780–801 are disordered; it reads AKGQEKKPAAKKDPKKTKSLAA. A compositionally biased stretch (basic residues) spans 792-801; the sequence is DPKKTKSLAA.

It belongs to the peptidase S16 family. In terms of assembly, homohexamer. Organized in a ring with a central cavity.

The protein resides in the cytoplasm. The enzyme catalyses Hydrolysis of proteins in presence of ATP.. In terms of biological role, ATP-dependent serine protease that mediates the selective degradation of mutant and abnormal proteins as well as certain short-lived regulatory proteins. Required for cellular homeostasis and for survival from DNA damage and developmental changes induced by stress. Degrades polypeptides processively to yield small peptide fragments that are 5 to 10 amino acids long. Binds to DNA in a double-stranded, site-specific manner. This chain is Lon protease 2, found in Bdellovibrio bacteriovorus (strain ATCC 15356 / DSM 50701 / NCIMB 9529 / HD100).